The sequence spans 542 residues: CTP synthase (542 aa).

The interval 1 to 265 (MARYIFITGG…DSEVLCAFGI (265 aa)) is amidoligase domain. Serine 13 is a CTP binding site. Serine 13 is a binding site for UTP. ATP is bound at residue 14 to 19 (SLGKGI). An L-glutamine-binding site is contributed by tyrosine 54. Aspartate 71 contacts ATP. Positions 71 and 139 each coordinate Mg(2+). CTP contacts are provided by residues 146–148 (DIE), 186–191 (KTKPTQ), and lysine 222. UTP contacts are provided by residues 186–191 (KTKPTQ) and lysine 222. Residues 291-541 (TIAVVGKYTG…IEATVEQSRL (251 aa)) enclose the Glutamine amidotransferase type-1 domain. L-glutamine is bound at residue alanine 353. Cysteine 380 acts as the Nucleophile; for glutamine hydrolysis in catalysis. L-glutamine is bound by residues 381-384 (FGMQ), glutamate 404, and arginine 469. Active-site residues include histidine 514 and glutamate 516.

Belongs to the CTP synthase family. In terms of assembly, homotetramer.

The catalysed reaction is UTP + L-glutamine + ATP + H2O = CTP + L-glutamate + ADP + phosphate + 2 H(+). The enzyme catalyses L-glutamine + H2O = L-glutamate + NH4(+). It carries out the reaction UTP + NH4(+) + ATP = CTP + ADP + phosphate + 2 H(+). The protein operates within pyrimidine metabolism; CTP biosynthesis via de novo pathway; CTP from UDP: step 2/2. Allosterically activated by GTP, when glutamine is the substrate; GTP has no effect on the reaction when ammonia is the substrate. The allosteric effector GTP functions by stabilizing the protein conformation that binds the tetrahedral intermediate(s) formed during glutamine hydrolysis. Inhibited by the product CTP, via allosteric rather than competitive inhibition. Its function is as follows. Catalyzes the ATP-dependent amination of UTP to CTP with either L-glutamine or ammonia as the source of nitrogen. Regulates intracellular CTP levels through interactions with the four ribonucleotide triphosphates. The sequence is that of CTP synthase from Bartonella quintana (strain Toulouse) (Rochalimaea quintana).